Consider the following 544-residue polypeptide: Peptide chain release factor 3 (544 aa).

The tr-type G domain maps to 17–286; the sequence is EKRRNFAIIS…SFLDYGLAPR (270 aa). Residues 26–33, 94–98, and 148–151 contribute to the GTP site; these read SHPDAGKT, DTPGH, and NKMD.

Belongs to the TRAFAC class translation factor GTPase superfamily. Classic translation factor GTPase family. PrfC subfamily.

The protein resides in the cytoplasm. Its function is as follows. Increases the formation of ribosomal termination complexes and stimulates activities of RF-1 and RF-2. It binds guanine nucleotides and has strong preference for UGA stop codons. It may interact directly with the ribosome. The stimulation of RF-1 and RF-2 is significantly reduced by GTP and GDP, but not by GMP. This is Peptide chain release factor 3 from Microcystis aeruginosa (strain NIES-843 / IAM M-2473).